The sequence spans 159 residues: Probable cyclic pyranopterin monophosphate synthase (159 aa).

Residues 75–77 (LCH) and 111–112 (ME) contribute to the substrate site. D126 is an active-site residue.

This sequence belongs to the MoaC family. As to quaternary structure, homohexamer; trimer of dimers.

It carries out the reaction (8S)-3',8-cyclo-7,8-dihydroguanosine 5'-triphosphate = cyclic pyranopterin phosphate + diphosphate. Its pathway is cofactor biosynthesis; molybdopterin biosynthesis. Functionally, catalyzes the conversion of (8S)-3',8-cyclo-7,8-dihydroguanosine 5'-triphosphate to cyclic pyranopterin monophosphate (cPMP). This Pyrococcus horikoshii (strain ATCC 700860 / DSM 12428 / JCM 9974 / NBRC 100139 / OT-3) protein is Probable cyclic pyranopterin monophosphate synthase.